Here is a 573-residue protein sequence, read N- to C-terminus: Protein phosphatase EYA3 (573 aa).

Methionine 1 bears the N-acetylmethionine mark. 2 disordered regions span residues 1 to 46 (MEEE…LASN) and 236 to 296 (TYQS…DATS). The segment covering 20–46 (SGEQTISQVSNPDVSDQKPETSSLASN) has biased composition (polar residues). Over residues 254–271 (LSSGDPSTSPSLSQTTPS) the composition is skewed to low complexity. Residues serine 262 and serine 266 each carry the phosphoserine modification. Catalysis depends on aspartate 309, which acts as the Nucleophile. Mg(2+) contacts are provided by aspartate 309 and aspartate 311. Residue aspartate 311 is the Proton donor of the active site. Serine 438 and serine 472 each carry phosphoserine. Residue aspartate 537 participates in Mg(2+) binding.

It belongs to the HAD-like hydrolase superfamily. EYA family. Interacts with SIX1 and DACH1, and probably SIX2, SIX4, SIX5. Requires Mg(2+) as cofactor. Ser-266 phosphorylation is required for localization at sites of DNA damage and directing interaction with H2AX.

Its subcellular location is the cytoplasm. It is found in the nucleus. It catalyses the reaction O-phospho-L-tyrosyl-[protein] + H2O = L-tyrosyl-[protein] + phosphate. In terms of biological role, tyrosine phosphatase that specifically dephosphorylates 'Tyr-142' of histone H2AX (H2AXY142ph). 'Tyr-142' phosphorylation of histone H2AX plays a central role in DNA repair and acts as a mark that distinguishes between apoptotic and repair responses to genotoxic stress. Promotes efficient DNA repair by dephosphorylating H2AX, promoting the recruitment of DNA repair complexes containing MDC1. Its function as histone phosphatase probably explains its role in transcription regulation during organogenesis. Coactivates SIX1, and seems to coactivate SIX2, SIX4 and SIX5. The repression of precursor cell proliferation in myoblasts by SIX1 is switched to activation through recruitment of EYA3 to the SIX1-DACH1 complex and seems to be dependent on EYA3 phosphatase activity. May be involved in development of the eye. The polypeptide is Protein phosphatase EYA3 (EYA3) (Homo sapiens (Human)).